The primary structure comprises 426 residues: Endothelin-1 receptor (426 aa).

The first 20 residues, Met1 to Ala20, serve as a signal peptide directing secretion. Residues Asp21–Lys80 are Extracellular-facing. N-linked (GlcNAc...) asparagine glycosylation is found at Asn29 and Asn62. A helical membrane pass occupies residues Tyr81–Leu102. Over Arg103–Arg112 the chain is Cytoplasmic. The chain crosses the membrane as a helical span at residues Asn113 to Ile132. Residues Asp133–Lys159 lie on the Extracellular side of the membrane. Cys158 and Cys239 are joined by a disulfide. The chain crosses the membrane as a helical span at residues Leu160–Val181. Topologically, residues Asp182–Glu205 are cytoplasmic. Residues Ile206–Phe229 form a helical membrane-spanning segment. Residues Glu230 to Asp256 lie on the Extracellular side of the membrane. A helical transmembrane segment spans residues Trp257 to Met278. The Cytoplasmic portion of the chain corresponds to Thr279 to Lys306. Residues Thr307 to Leu328 traverse the membrane as a helical segment. The Extracellular segment spans residues Lys329–Leu347. Residues Leu348–Val372 traverse the membrane as a helical segment. Residues Ser373–Asn426 lie on the Cytoplasmic side of the membrane. Ser424 is modified (phosphoserine).

Belongs to the G-protein coupled receptor 1 family. Endothelin receptor subfamily. EDNRA sub-subfamily. Interacts with HDAC7 and KAT5. As to expression, predominantly expressed in vascular smooth muscle cells of a variety of issues, bronchial smooth muscle cells, myocardium, and the pituitary gland.

It is found in the cell membrane. Functionally, receptor for endothelin-1. Mediates its action by association with G proteins that activate a phosphatidylinositol-calcium second messenger system. The rank order of binding affinities for ET-A is: ET1 &gt; ET2 &gt;&gt; ET3. The sequence is that of Endothelin-1 receptor from Rattus norvegicus (Rat).